The following is a 504-amino-acid chain: Chorion-specific transcription factor GCMb (504 aa).

The GCM DNA-binding region spans 19 to 174 (LTWDINDPQM…KSETEGRRSA (156 aa)). Zn(2+) is bound by residues Cys81, Cys87, Cys91, Cys118, Cys121, Cys130, His157, and His159. Composition is skewed to basic and acidic residues over residues 155–172 (GVHD…EGRR) and 188–203 (RRSE…DIRG). A disordered region spans residues 155–203 (GVHDHPRPESKSETEGRRSALKRQMASFYQPQKRRSEEPEARSTQDIRG). Positions 379–393 (LQTVITTTVAYQAYQ) are C-terminal conserved inhibitory domain (CCID). The disordered stretch occupies residues 438–472 (ASPSGRAPLKVPGDCQAPRPTLDFPQEADPSGTDG).

It is found in the nucleus. Transcription factor that binds specific sequences on gene promoters and activate their transcription. Through the regulation of gene transcription, may play a role in parathyroid gland development. This chain is Chorion-specific transcription factor GCMb, found in Mus musculus (Mouse).